The sequence spans 468 residues: Na(+)/H(+) antiporter (468 aa).

8 consecutive transmembrane segments (helical) span residues 12 to 32 (HLAL…SEVF), 36 to 56 (LLVG…PHAA), 81 to 96 (DVRV…GAYF), 103 to 123 (IIVM…GFAY), 133 to 153 (GSLL…ALIV), 169 to 189 (LLIA…YFAI), 204 to 224 (WVLL…CVIG), and 258 to 278 (GIGT…GILF). Residue Asn-287 is glycosylated (N-linked (GlcNAc...) asparagine). Residues 293–313 (VPAFIDQTFSLLFFTYYGTII) traverse the membrane as a helical segment. Residue Asn-319 is glycosylated (N-linked (GlcNAc...) asparagine). 3 helical membrane-spanning segments follow: residues 320–340 (WSVE…TLVC), 362–382 (ALFV…AFLA), and 408–428 (IIWP…GFSI). Ser-449 and Ser-451 each carry phosphoserine.

Belongs to the fungal Na(+)/H(+) exchanger family.

The protein resides in the cell membrane. Sodium export from cell, takes up external protons in exchange for internal sodium ions. Involved in regulation of pH. This chain is Na(+)/H(+) antiporter, found in Schizosaccharomyces pombe (strain 972 / ATCC 24843) (Fission yeast).